The primary structure comprises 146 residues: Large ribosomal subunit protein uL13 (146 aa).

It belongs to the universal ribosomal protein uL13 family. Part of the 50S ribosomal subunit.

In terms of biological role, this protein is one of the early assembly proteins of the 50S ribosomal subunit, although it is not seen to bind rRNA by itself. It is important during the early stages of 50S assembly. This chain is Large ribosomal subunit protein uL13, found in Borreliella burgdorferi (strain ATCC 35210 / DSM 4680 / CIP 102532 / B31) (Borrelia burgdorferi).